We begin with the raw amino-acid sequence, 408 residues long: MPVLLIVVDGLSDRPIDGKTPLSVARKPNLDRLAEMGINGIMDTIAPGIRPGSDTSHLALLGYDPYKYYSGRGPIEAAGVGIEIKPGDVAFRANFATVEGEGSIFDKTVVDRRAGRIEDTSELIKALREIELPVELLVERGTGHRAAVVFRGEGLSDRVSDTDPKAVGKKVKRCVPLADDAKAKKTAEIVNEFMQKAHEVLENHPLNRERAEKGLLKANALLLRGAGEMPHVPSFKDKTGLRLCVIAATALIKGVGRVVGADVITPEGATGNKNTNLEAKVKAAINALESYDVVLLHIKATDELGHDGDFEGKKAFIEKLDEKIAPLLDLDFSKTCLILTADHSTPIKVKDHTADPVPVVIVHEDVRRDEVSSFSEFEAYKGGLCRIRGMDLLNIALDLLNIAKKFGA.

Belongs to the BPG-independent phosphoglycerate mutase family. A-PGAM subfamily. In terms of assembly, monomer. The cofactor is Mn(2+).

It carries out the reaction (2R)-2-phosphoglycerate = (2R)-3-phosphoglycerate. The protein operates within carbohydrate degradation; glycolysis; pyruvate from D-glyceraldehyde 3-phosphate: step 3/5. Its function is as follows. Catalyzes the interconversion of 2-phosphoglycerate and 3-phosphoglycerate. The chain is 2,3-bisphosphoglycerate-independent phosphoglycerate mutase 1 (apgM1) from Archaeoglobus fulgidus (strain ATCC 49558 / DSM 4304 / JCM 9628 / NBRC 100126 / VC-16).